A 473-amino-acid chain; its full sequence is Photosystem II CP43 reaction center protein (473 aa).

Positions 1 to 14 (MKTLYSLRRFYHVE) are excised as a propeptide. Residue T15 is modified to N-acetylthreonine. T15 bears the Phosphothreonine mark. Helical transmembrane passes span 69-93 (LFEVAHFVPEKPMYEQGLILLPHLA), 134-155 (LLGPETLEESFPFFGYVWKDRN), 178-200 (KALYFGGVYDTWAPGGGDVRKIT), 255-275 (KPFAWARRALVWSGEAYLSYS), and 291-312 (WFNNTAYPSEFYGPTGPEASQA). E367 contributes to the [CaMn4O5] cluster binding site. A helical membrane pass occupies residues 447-471 (RARAAAAGFEKGIDRDFEPVLFMTP).

Belongs to the PsbB/PsbC family. PsbC subfamily. In terms of assembly, PSII is composed of 1 copy each of membrane proteins PsbA, PsbB, PsbC, PsbD, PsbE, PsbF, PsbH, PsbI, PsbJ, PsbK, PsbL, PsbM, PsbT, PsbX, PsbY, PsbZ, Psb30/Ycf12, at least 3 peripheral proteins of the oxygen-evolving complex and a large number of cofactors. It forms dimeric complexes. Binds multiple chlorophylls and provides some of the ligands for the Ca-4Mn-5O cluster of the oxygen-evolving complex. It may also provide a ligand for a Cl- that is required for oxygen evolution. PSII binds additional chlorophylls, carotenoids and specific lipids. is required as a cofactor.

The protein localises to the plastid. The protein resides in the chloroplast thylakoid membrane. In terms of biological role, one of the components of the core complex of photosystem II (PSII). It binds chlorophyll and helps catalyze the primary light-induced photochemical processes of PSII. PSII is a light-driven water:plastoquinone oxidoreductase, using light energy to abstract electrons from H(2)O, generating O(2) and a proton gradient subsequently used for ATP formation. In Solanum tuberosum (Potato), this protein is Photosystem II CP43 reaction center protein.